Consider the following 76-residue polypeptide: Omega-conotoxin-like TeA61 (76 aa).

The signal sequence occupies residues 1 to 22 (MKLTCMMIVAVLFLTAWTFATA). Positions 23 to 51 (DDSSNGLGNLFLKAHHEMKNPEASKLNER) are excised as a propeptide. Disulfide bonds link Cys52–Cys67, Cys59–Cys70, and Cys66–Cys75.

This sequence belongs to the conotoxin O1 superfamily. As to expression, expressed by the venom duct.

It localises to the secreted. Omega-conotoxins act at presynaptic membranes, they bind and block voltage-gated calcium channels (Cav). The chain is Omega-conotoxin-like TeA61 from Conus textile (Cloth-of-gold cone).